The primary structure comprises 77 residues: Protein ImpC (77 aa).

The protein belongs to the DinI family.

The chain is Protein ImpC (impC) from Salmonella typhimurium.